We begin with the raw amino-acid sequence, 461 residues long: Metacaspase-1 (461 aa).

Gly residues-rich tracts occupy residues 1 to 21 (MSYP…GYGG), 45 to 66 (QYGG…GYGP), 74 to 86 (QYGG…GYGP), and 105 to 119 (PGGQ…GHPG). Residues 1–154 (MSYPGQGGNT…PQGNQAFGGT (154 aa)) form a disordered region. Low complexity-rich tracts occupy residues 121–131 (GNQAPPGQYGQ) and 138–148 (HGNHNMPPQGN). Residues H252 and C308 contribute to the active site.

It belongs to the peptidase C14B family.

Functionally, involved in cell death (apoptosis). The protein is Metacaspase-1 (MCA1) of Yarrowia lipolytica (strain CLIB 122 / E 150) (Yeast).